The chain runs to 750 residues: Protein psiO (750 aa).

The N-terminal stretch at 1 to 22 (MKEKIKLSLLILTSIILAVANS) is a signal peptide. At 23 to 688 (QTQPKTLAMT…GCNTAAVVST (666 aa)) the chain is on the extracellular side. N-linked (GlcNAc...) asparagine glycosylation is present at Asn129. One can recognise a PA14 domain in the interval 140 to 286 (QEYFPINGKG…DDYCGVCNGD (147 aa)). N-linked (GlcNAc...) asparagine glycans are attached at residues Asn447, Asn506, Asn554, Asn571, and Asn659. The helical transmembrane segment at 689-709 (AVIAGVTVAAVVGLGIFLYGG) threads the bilayer. The Cytoplasmic portion of the chain corresponds to 710–750 (KKGYDYYQDNKSKGMTGANSNPLYKESGNAGQNPLYNDNNL). The disordered stretch occupies residues 727 to 750 (ANSNPLYKESGNAGQNPLYNDNNL). Residues 738-750 (NAGQNPLYNDNNL) show a composition bias toward polar residues.

This sequence belongs to the prespore-cell-inducing factor family.

It localises to the membrane. The polypeptide is Protein psiO (psiO) (Dictyostelium discoideum (Social amoeba)).